The chain runs to 360 residues: Proline-rich protein 11 (360 aa).

Disordered stretches follow at residues 20–43 and 174–201; these read KKKEASHFQSKLITPPPPPPSPER and PPTLPQPASHFPPPPPPPPLPPPPPPLA. The residue at position 33 (threonine 33) is a Phosphothreonine. A Phosphoserine modification is found at serine 40. The span at 175–201 shows a compositional bias: pro residues; the sequence is PTLPQPASHFPPPPPPPPLPPPPPPLA. Positions 285 to 291 match the Phosphodegron motif; sequence LITPGKS. Phosphothreonine is present on threonine 287. Serine 291 carries the post-translational modification Phosphoserine. A D-box motif is present at residues 296–304; sequence RKLLRKVDV. The KEN box motif lies at 316–318; sequence KEN. The Phosphodegron motif lies at 325 to 330; sequence LTPVMT. Residues 340-360 form a disordered region; the sequence is AHPRSPTPTLPLSTSSFDEQN. At serine 344 the chain carries Phosphoserine. Threonine 346 and threonine 348 each carry phosphothreonine. The segment covering 349-360 has biased composition (low complexity); it reads LPLSTSSFDEQN.

Ubiquitinated. Rapidly degraded by the proteasome; degradation may involve FBXW7-specific phosphorylated phosphodegron motifs. As to expression, ubiquitously expressed.

It is found in the cytoplasm. The protein localises to the nucleus. Plays a critical role in cell cycle progression. The polypeptide is Proline-rich protein 11 (PRR11) (Homo sapiens (Human)).